Consider the following 444-residue polypeptide: Cholecystokinin receptor type A (444 aa).

Topologically, residues 1-56 (MSHSPARQHLVESSRMDVVDSLLMNGSNITPPCELGLENETLFCLDQPQPSKEWQS) are extracellular. 2 N-linked (GlcNAc...) asparagine glycosylation sites follow: Asn-25 and Asn-39. A disulfide bridge connects residues Cys-33 and Cys-44. The helical transmembrane segment at 57 to 82 (ALQILLYSIIFLLSVLGNTLVITVLI) threads the bilayer. The Cytoplasmic portion of the chain corresponds to 83–92 (RNKRMRTVTN). The helical transmembrane segment at 93–119 (IFLLSLAVSDLMLCLFCMPFNLIPNLL) threads the bilayer. At 120–130 (KDFIFGSAVCK) the chain is on the extracellular side. Cys-129 and Cys-211 are disulfide-bonded. Residues 131 to 152 (TTTYFMGTSVSVSTFNLVAISL) traverse the membrane as a helical segment. The Cytoplasmic portion of the chain corresponds to 153–172 (ERYGAICRPLQSRVWQTKSH). Residues 173–193 (ALKVIAATWCLSFTIMTPYPI) form a helical membrane-spanning segment. Over 194–225 (YSNLVPFTKNNNQTANMCRFLLPSDAMQQSWQ) the chain is Extracellular. Asn-205 is a glycosylation site (N-linked (GlcNAc...) asparagine). A helical transmembrane segment spans residues 226-249 (TFLLLILFLLPGIVMVVAYGLISL). The Cytoplasmic segment spans residues 250-329 (ELYQGIKFDA…NLIAKKRVIR (80 aa)). A disordered region spans residues 263–288 (KSAKEKKPSTGSSTRYEDSDGCYLQK). Residues 330 to 350 (MLIVIVVLFFLCWMPIFSANA) traverse the membrane as a helical segment. Residues 351–365 (WRAYDTVSAEKHLSG) are Extracellular-facing. Residues 366-389 (TPISFILLLSYTSSCVNPIIYCFM) form a helical membrane-spanning segment. Residues 390 to 444 (NKRFRLGFMATFPCCPNPGPPGVRGEVGEEEDGRTIRALLSRYSYSHMSTSAPPP) lie on the Cytoplasmic side of the membrane. Cys-403 is lipidated: S-palmitoyl cysteine.

This sequence belongs to the G-protein coupled receptor 1 family. Pancreas and brain. Also expressed in the gastrointestinal system and vagus nerve.

It localises to the cell membrane. In terms of biological role, receptor for cholecystokinin. Mediates pancreatic growth and enzyme secretion, smooth muscle contraction of the gall bladder and stomach. Has a 1000-fold higher affinity for CCK rather than for gastrin. It modulates feeding and dopamine-induced behavior in the central and peripheral nervous system. This receptor mediates its action by association with G proteins that activate a phosphatidylinositol-calcium second messenger system. In Rattus norvegicus (Rat), this protein is Cholecystokinin receptor type A (Cckar).